The chain runs to 606 residues: MPYEIKKVFASLPQVERGVSKILGGDPKGDNFLYTNGKCVILRNIDNPAVADIYTEHAHQVVVAKYAPSGFYIASGDISGKLRIWDTTQKEHILKYEYQPFAGKIKDIAWTEDSKRIAVVGEGREKFGAVFLWDTGSSVGEITGHNKVINSVDIKQNRPYRLATGSDDNCAAFFEGPPFKFKFTIGDHSRFVNCVRFSPDGNRFATASADGQIFIYDGKTGEKVCALGGSKAHDGGIYAISWSPDSTHLLSASGDKTSKIWDVNVNSVVSTFPMGSNVLDQQLGCLWQKDHLLSISLSGYINYLDKNNPSKPLRVIKGHSKSIQCLTVHKNGGKSYIYSGSHDGHINYWDSETGENDSFSGKGHTNQVSRMTVDESGQLVSCSMDDTVRYTNLTLRDYSGQGVVKLDVQPKCVAVGPGGYTVVVCIGQIVLLKDQKKCFSIDNPGYEPEVVAVHPGGDTVAVGGSDGNVRVYSILGATLKDEGKLLEAKGPVTDLAYSHDGAFLAVCDASKVVTVFSVADGYSENNVFYGHHAKIVCLAWSPDNEHFASGGMDMMVYVWTLSDPETKVKIQDAHRLHHVSSLAWLDEHTLVTTSHDASVKEWTITY.

WD repeat units follow at residues 4–45 (EIKK…LRNI), 48–87 (PAVADIYTEHAHQVVVAKYAPSGFYIASGDISGKLRIWDT), 93–135 (ILKY…LWDT), 138–176 (SVGEITGHNKVINSVDIKQNRPYRLATGSDDNCAAFFEG), 180–218 (KFKFTIGDHSRFVNCVRFSPDGNRFATASADGQIFIYDG), 224–263 (VCALGGSKAHDGGIYAISWSPDSTHLLSASGDKTSKIWDV), 270–306 (STFPMGSNVLDQQLGCLWQKDHLLSISLSGYINYLDK), 311–351 (KPLR…YWDS), 358–408 (SFSG…KLDV), 432–474 (LKDQ…VYSI), 480–518 (KDEGKLLEAKGPVTDLAYSHDGAFLAVCDASKVVTVFSV), 523–561 (SENNVFYGHHAKIVCLAWSPDNEHFASGGMDMMVYVWTL), and 566–604 (TKVKIQDAHRLHHVSSLAWLDEHTLVTTSHDASVKEWTI). K28, K81, K95, and K115 each carry N6-acetyllysine. Phosphotyrosine is present on Y238. K480 carries the N6-acetyllysine modification.

Belongs to the WD repeat AIP1 family.

It is found in the cytoplasm. The protein localises to the cytoskeleton. Its subcellular location is the cell projection. The protein resides in the podosome. Its function is as follows. Induces disassembly of actin filaments in conjunction with ADF/cofilin family proteins. Enhances cofilin-mediated actin severing. Involved in cytokinesis. Involved in chemotactic cell migration by restricting lamellipodial membrane protrusions. Involved in myocardium sarcomere organization. Required for cardiomyocyte growth and maintenance. Involved in megakaryocyte maturation and platelet shedding. Required for the establishment of planar cell polarity (PCP) during follicular epithelium development and for cell shape changes during PCP; the function seems to implicate cooperation with CFL1 and/or DSTN/ADF. Involved in the generation/maintenance of cortical tension. Involved in assembly and maintenance of epithelial apical cell junctions and plays a role in the organization of the perijunctional actomyosin belt. This is WD repeat-containing protein 1 (Wdr1) from Rattus norvegicus (Rat).